Consider the following 311-residue polypeptide: Protoheme IX farnesyltransferase (311 aa).

A run of 8 helical transmembrane segments spans residues 30-50 (VVQL…PGWP), 55-75 (WGVA…AAAF), 108-128 (FAVL…NALT), 129-149 (MWLT…LLKP), 153-173 (QNIV…WAAM), 182-202 (WILC…LALY), 233-253 (FVLF…WFYL), and 287-307 (IWHL…GPLL).

The protein belongs to the UbiA prenyltransferase family. Protoheme IX farnesyltransferase subfamily.

It localises to the cell inner membrane. The enzyme catalyses heme b + (2E,6E)-farnesyl diphosphate + H2O = Fe(II)-heme o + diphosphate. It participates in porphyrin-containing compound metabolism; heme O biosynthesis; heme O from protoheme: step 1/1. In terms of biological role, converts heme B (protoheme IX) to heme O by substitution of the vinyl group on carbon 2 of heme B porphyrin ring with a hydroxyethyl farnesyl side group. In Methylibium petroleiphilum (strain ATCC BAA-1232 / LMG 22953 / PM1), this protein is Protoheme IX farnesyltransferase.